A 303-amino-acid polypeptide reads, in one-letter code: Oxygen-dependent coproporphyrinogen-III oxidase (303 aa).

A substrate-binding site is contributed by S93. H97 and H107 together coordinate a divalent metal cation. The Proton donor role is filled by H107. 109-111 is a substrate binding site; that stretch reads NVR. A divalent metal cation contacts are provided by H146 and H176. The tract at residues 241–276 is important for dimerization; that stretch reads YVEFNLVYDRGTLFGLQSGGRTESILMSLPPQVRWG. 259 to 261 provides a ligand contact to substrate; sequence GGR.

This sequence belongs to the aerobic coproporphyrinogen-III oxidase family. Homodimer. It depends on a divalent metal cation as a cofactor.

The protein localises to the cytoplasm. It catalyses the reaction coproporphyrinogen III + O2 + 2 H(+) = protoporphyrinogen IX + 2 CO2 + 2 H2O. The protein operates within porphyrin-containing compound metabolism; protoporphyrin-IX biosynthesis; protoporphyrinogen-IX from coproporphyrinogen-III (O2 route): step 1/1. Its function is as follows. Involved in the heme biosynthesis. Catalyzes the aerobic oxidative decarboxylation of propionate groups of rings A and B of coproporphyrinogen-III to yield the vinyl groups in protoporphyrinogen-IX. This is Oxygen-dependent coproporphyrinogen-III oxidase from Pseudomonas putida (strain ATCC 700007 / DSM 6899 / JCM 31910 / BCRC 17059 / LMG 24140 / F1).